Here is a 403-residue protein sequence, read N- to C-terminus: Alkaline protease 1 (403 aa).

The signal sequence occupies residues 1–21; sequence MQSIKRTLLLLGAILPAVLGA. The propeptide occupies 22 to 125; the sequence is PVQETRRAAE…QIYYLDGLTT (104 aa). Residues 36–120 form the Inhibitor I9 domain; the sequence is KYIVTFKPGI…YVEEDQIYYL (85 aa). Residues 130–403 form the Peptidase S8 domain; sequence PWGLGSISHK…PNLLAYNGNA (274 aa). Catalysis depends on charge relay system residues aspartate 162 and histidine 193. N-linked (GlcNAc...) asparagine glycosylation occurs at asparagine 253. Residue serine 349 is the Charge relay system of the active site.

This sequence belongs to the peptidase S8 family.

It localises to the secreted. The catalysed reaction is Hydrolysis of proteins with broad specificity, and of Bz-Arg-OEt &gt; Ac-Tyr-OEt. Does not hydrolyze peptide amides.. Functionally, secreted alkaline protease that allows assimilation of proteinaceous substrates. In Aspergillus flavus (strain ATCC 200026 / FGSC A1120 / IAM 13836 / NRRL 3357 / JCM 12722 / SRRC 167), this protein is Alkaline protease 1 (alp1).